A 1167-amino-acid chain; its full sequence is MEEVIWEQYTVTLQKDSKRGFGIAVSGGRDNPHFENGETSIVISDVLPGGPADGLLQENDRVVMVNGTPMEDVLHSFAVQQLRKSGKIAAIVVKRPRKVQVAPLQGSPPLSHDDRGFEVIEEFDGRSFRSGYSERSRHSSHDMLSHSWEGNRERGRPHQRTQSRERERSRGRSLERGLDQEDYGRSRERSRGRSLERGLDRDFVSRDHSRGRSIDRDYDRDYERSYHEAYEPDYGGGYSPSYDRRAHPETRYERSRSREHLRSRSPSPESRSRHEHKGQHDPDRPIGVLLTKSKANEEYGLRLGSQIFIKEMTRTGLATKDGNLHEGDIILKINGTVTENMSLTDARKLIEKSRGKLQLVVLRDSKQTLINIPALNDSDSEVEDISEIESNRSFSPEERRQQYSDQDYHSSTEKLKERPSSREETSGRLSRMGATPTPFKSTGDITAAGVTEASREPRYQEEGPVPQPRTAPRVFLRPSPEDEAIYGPNTKMVRFKKGDSVGLRLAGGNDVGIFVAGIQEGTSAEQEGLQEGDQILKVNTQDFRGLVREDAVLYLLEIPKGETVTILAQSRADVYRDILACGRGDSFFIRSHFECEKETPQSLAFTRGEVFRVVDTLYDGKLGHWLAVRIGNELEKGLIPNKSRAEQMASVQNAQRENAGDRADFWRMRGQRSSGGVKKNLRKSREDLAAAVSVSTKFPAYEKVLLREAGFKRPVVLFGPIADIAMERLATELPDLFQTAKTEPKDAGSEKSSGVVRLNTVRQIIEQDKHALLDVTPKAVDLLNYTQWFPIVIFFNPDSRQGVKTIRQRLSPTSNKSSRKLFDQANKLKKTCSHLFTATINVNSANDGWFGSLKDSIQQQQNEAVWVSEGKMEGMDDDAEDRMSYLTAMGADYLSCDSRLISDFEDTDGEGGAYTDNELEEPAEEPLVSSITRSSEPVQHEENIRKSSPEPRAQMRRAASRDQLRDASPPPAFKPEPPKARSQNREDSFDYSKSNLPATAGSEIPGGSTKGYPPPIAAKPAFGRPILKPSTPVPMPESEEVGESTEEQEDAPRSVLGRVKIFEKMDHKAKLQRMQELQEAQNARIEIAQKHPDIYAVPIKAPKPDAGLPPHMSSRPPEPQKAPSRLYQDTRGSYGSDPEEEEYRQQLAAHSKRGYYSQPSRYRDTEL.

The 88-residue stretch at threonine 10–arginine 97 folds into the PDZ 1 domain. Phosphoserine occurs at positions 107, 127, 130, 140, 145, 147, 173, 194, 205, and 239. Residues arginine 129–leucine 195 form a disordered region. The segment at serine 225–isoleucine 286 is disordered. The span at tyrosine 242–arginine 262 shows a compositional bias: basic and acidic residues. One can recognise a PDZ 2 domain in the interval glycine 287–serine 365. A phosphoserine mark is found at serine 305, serine 378, serine 380, serine 386, serine 395, serine 404, serine 410, and serine 411. Residues glutamate 381–isoleucine 485 form a disordered region. Residues serine 395–serine 426 are compositionally biased toward basic and acidic residues. The residue at position 435 (threonine 435) is a Phosphothreonine. Serine 479 bears the Phosphoserine mark. A PDZ 3 domain is found at asparagine 489–serine 570. Position 554 is a phosphotyrosine (tyrosine 554). The region spanning glycine 584–alanine 649 is the SH3 domain. The Guanylate kinase-like domain occupies glycine 660–glutamine 858. A phosphoserine mark is found at serine 684 and serine 884. Threonine 887 carries the phosphothreonine modification. Phosphoserine is present on residues serine 895 and serine 902. Disordered regions lie at residues phenylalanine 904–valine 1055 and tyrosine 1095–leucine 1167. A phosphothreonine mark is found at threonine 907 and threonine 915. The span at valine 938–proline 949 shows a compositional bias: basic and acidic residues. 5 positions are modified to phosphoserine: serine 948, serine 960, serine 968, serine 988, and serine 1044. Residues glutamate 976–aspartate 990 show a composition bias toward basic and acidic residues. The segment covering glutamate 1037 to glutamate 1049 has biased composition (acidic residues). At tyrosine 1095 the chain carries Phosphotyrosine. Phosphoserine is present on residues serine 1124 and serine 1136. Positions threonine 1165 to leucine 1167 are interaction with SCRIB.

Belongs to the MAGUK family. Homodimer. Interacts (via PDZ2 domain) with TJP1/ZO1 (via PDZ2 domain). Interacts with UBN1. Interacts with SCRIB. Interacts with OCLN. Interacts with SAFB in the nucleus. Interacts with USP53 (via the C-terminal region). Interacts with claudins, including CLDN1, CLDN2, CLDN3, CLDN5 and CLDN7. Interacts with CLDN18. Interacts (via N-terminus) with CTNNA1.

Its subcellular location is the cell junction. It localises to the adherens junction. The protein resides in the cell membrane. The protein localises to the nucleus. It is found in the tight junction. Its function is as follows. Plays a role in tight junctions and adherens junctions. Acts as a positive regulator of RANKL-induced osteoclast differentiation, potentially via mediating downstream transcriptional activity. The chain is Tight junction protein 2 from Mus musculus (Mouse).